The primary structure comprises 1060 residues: DNA-directed RNA polymerase subunit beta (1060 aa).

The protein belongs to the RNA polymerase beta chain family. In plastids the minimal PEP RNA polymerase catalytic core is composed of four subunits: alpha, beta, beta', and beta''. When a (nuclear-encoded) sigma factor is associated with the core the holoenzyme is formed, which can initiate transcription.

It localises to the plastid. The protein resides in the chloroplast. The enzyme catalyses RNA(n) + a ribonucleoside 5'-triphosphate = RNA(n+1) + diphosphate. Its function is as follows. DNA-dependent RNA polymerase catalyzes the transcription of DNA into RNA using the four ribonucleoside triphosphates as substrates. The polypeptide is DNA-directed RNA polymerase subunit beta (Lactuca sativa (Garden lettuce)).